Reading from the N-terminus, the 152-residue chain is Clitocypin-5 (152 aa).

Homodimer.

Functionally, binds and inhibits cysteine proteinases. Inhibits most strongly papain and cathepsin L, more weakly bromelain and cathepsin B while it is completely ineffective against cathepsin H. The protein is Clitocypin-5 (clt5) of Clitocybe nebularis (Clouded agaric).